Reading from the N-terminus, the 765-residue chain is Membrane metallo-endopeptidase-like 1 (765 aa).

Residues M1 to G19 are Cytoplasmic-facing. The chain crosses the membrane as a helical; Signal-anchor for type II membrane protein span at residues L20 to I40. Topologically, residues G41–W765 are lumenal. A Peptidase M13 domain is found at I74–W765. Cystine bridges form between C75/C80, C98/C750, C106/C710, C161/C425, and C636/C762. An a peptide-binding site is contributed by R121. N-linked (GlcNAc...) asparagine glycans are attached at residues N163, N279, N303, and N336. Residues F523–L549 adopt a coiled-coil conformation. H599 contacts Zn(2+). E600 is a catalytic residue. Residues H603 and E662 each contribute to the Zn(2+) site. D666 (proton donor) is an active-site residue. N-linked (GlcNAc...) asparagine glycosylation occurs at N694.

It belongs to the peptidase M13 family. It depends on Zn(2+) as a cofactor. Post-translationally, N-glycosylated. Highly expressed in testis. Also expressed in ovary. Weakly or not expressed in brain, lung, heart, liver, kidney, adrenal gland and intestine.

The protein localises to the membrane. It localises to the secreted. The enzyme catalyses Preferential cleavage of polypeptides between hydrophobic residues, particularly with Phe or Tyr at P1'.. Its activity is regulated as follows. Inhibited by thiorphan and phosphoramidon. In terms of biological role, metalloprotease involved in sperm function, possibly by modulating the processes of fertilization and early embryonic development. Degrades a broad variety of small peptides with a preference for peptides shorter than 3 kDa containing neutral bulky aliphatic or aromatic amino acid residues. Shares the same substrate specificity with MME and cleaves peptides at the same amide bond. This chain is Membrane metallo-endopeptidase-like 1 (Mmel1), found in Mus musculus (Mouse).